Here is a 402-residue protein sequence, read N- to C-terminus: Succinyl-diaminopimelate desuccinylase (402 aa).

H88 contacts Zn(2+). D90 is an active-site residue. D121 lines the Zn(2+) pocket. The Proton acceptor role is filled by E155. Zn(2+) is bound by residues E156, E184, and H374.

The protein belongs to the peptidase M20A family. DapE subfamily. Homodimer. It depends on Zn(2+) as a cofactor. The cofactor is Co(2+).

The enzyme catalyses N-succinyl-(2S,6S)-2,6-diaminopimelate + H2O = (2S,6S)-2,6-diaminopimelate + succinate. The protein operates within amino-acid biosynthesis; L-lysine biosynthesis via DAP pathway; LL-2,6-diaminopimelate from (S)-tetrahydrodipicolinate (succinylase route): step 3/3. Catalyzes the hydrolysis of N-succinyl-L,L-diaminopimelic acid (SDAP), forming succinate and LL-2,6-diaminopimelate (DAP), an intermediate involved in the bacterial biosynthesis of lysine and meso-diaminopimelic acid, an essential component of bacterial cell walls. In Psychrobacter sp. (strain PRwf-1), this protein is Succinyl-diaminopimelate desuccinylase.